Reading from the N-terminus, the 471-residue chain is Glycosyl hydrolase family 109 protein 1 (471 aa).

An N-terminal signal peptide occupies residues 1–15 (MIKNLSTFFVGIALS). The N-palmitoyl cysteine moiety is linked to residue cysteine 16. The S-diacylglycerol cysteine moiety is linked to residue cysteine 16. Residues 70–71 (MR), aspartate 92, 141–144 (WKHH), 161–162 (EV), and asparagine 190 contribute to the NAD(+) site. Substrate is bound by residues tyrosine 219, arginine 235, 247–250 (YATH), and tyrosine 325. Residue tyrosine 247 coordinates NAD(+).

Belongs to the Gfo/Idh/MocA family. Glycosyl hydrolase 109 subfamily. It depends on NAD(+) as a cofactor.

The protein resides in the cell membrane. Its function is as follows. Glycosidase. The protein is Glycosyl hydrolase family 109 protein 1 of Phocaeicola vulgatus (strain ATCC 8482 / DSM 1447 / JCM 5826 / CCUG 4940 / NBRC 14291 / NCTC 11154) (Bacteroides vulgatus).